Here is a 94-residue protein sequence, read N- to C-terminus: DNA-directed RNA polymerase subunit Rpo11 (94 aa).

It belongs to the archaeal Rpo11/eukaryotic RPB11/RPC19 RNA polymerase subunit family. In terms of assembly, part of the RNA polymerase complex.

Its subcellular location is the cytoplasm. The enzyme catalyses RNA(n) + a ribonucleoside 5'-triphosphate = RNA(n+1) + diphosphate. Its function is as follows. DNA-dependent RNA polymerase (RNAP) catalyzes the transcription of DNA into RNA using the four ribonucleoside triphosphates as substrates. The chain is DNA-directed RNA polymerase subunit Rpo11 from Haloarcula marismortui (strain ATCC 43049 / DSM 3752 / JCM 8966 / VKM B-1809) (Halobacterium marismortui).